Reading from the N-terminus, the 541-residue chain is 2-hydroxyacylsphingosine 1-beta-galactosyltransferase (541 aa).

The first 20 residues, 1 to 20 (MKSYTPYFMLLWSAVGIARA), serve as a signal peptide directing secretion. Asn-78, Asn-333, and Asn-442 each carry an N-linked (GlcNAc...) asparagine glycan. A helical membrane pass occupies residues 472-492 (YFLLDIAFVLLLGAVLLYFIL). The interval 518–541 (HYQNGIRNGKYKGNGRVKHEKKVR) is disordered. Basic residues predominate over residues 526–541 (GKYKGNGRVKHEKKVR).

It belongs to the UDP-glycosyltransferase family.

It is found in the membrane. The protein localises to the endoplasmic reticulum. It carries out the reaction an N-acylsphing-4-enine + UDP-alpha-D-galactose = a beta-D-galactosyl-(1&lt;-&gt;1')-N-acylsphing-4-enine + UDP + H(+). The catalysed reaction is N-(2-hydroxy-hexanoyl)-sphing-4-enine + UDP-alpha-D-galactose = N-(2-hydroxy-hexanoyl)-beta-D-galactosyl-sphing-4-enine + UDP + H(+). It catalyses the reaction N-(2-hydroxy-hexanoyl)-sphinganine + UDP-alpha-D-galactose = N-(2-hydroxyhexanoyl)-beta-D-galactosylsphinganine + UDP + H(+). The enzyme catalyses an N-acyl-sphingoid base + UDP-alpha-D-galactose = a D-galactosylceramide + UDP + H(+). It functions in the pathway sphingolipid metabolism; galactosylceramide biosynthesis. Its function is as follows. Catalyzes the transfer of galactose to ceramide, a key enzymatic step in the biosynthesis of galactocerebrosides, which are abundant sphingolipids of the myelin membrane of the central nervous system and peripheral nervous system. Galactosylates both hydroxy- and non-hydroxy fatty acid-containing ceramides and diglycerides. The protein is 2-hydroxyacylsphingosine 1-beta-galactosyltransferase of Mus musculus (Mouse).